Reading from the N-terminus, the 1479-residue chain is WASH complex subunit 2 (1479 aa).

A compositionally biased stretch (low complexity) spans Met-1–Pro-17. Disordered stretches follow at residues Met-1–Trp-25, Gly-188–Lys-210, Phe-240–Lys-564, Phe-576–Ile-1383, and Thr-1419–Asp-1479. Acidic residues predominate over residues Glu-242 to Asp-279. Positions Ser-334–Leu-349 are enriched in low complexity. A compositionally biased stretch (acidic residues) spans Asp-422–Glu-431. Low complexity-rich tracts occupy residues Thr-465 to Lys-475 and Thr-514 to Lys-532. Phosphothreonine is present on Thr-535. Positions Ala-542–Ser-552 are enriched in polar residues. Basic and acidic residues predominate over residues Thr-595–Glu-620. Low complexity predominate over residues Pro-709–Pro-723. The span at Thr-765 to Asp-781 shows a compositional bias: basic and acidic residues. Over residues Ala-802–Glu-814 the composition is skewed to polar residues. Over residues Asp-839 to Ser-885 the composition is skewed to basic and acidic residues. Residues Lys-904–Glu-916 are compositionally biased toward polar residues. Positions Ser-951 to Lys-968 are enriched in low complexity. A compositionally biased stretch (basic and acidic residues) spans Lys-981–Asp-990. 2 stretches are compositionally biased toward low complexity: residues Phe-991 to Asp-1000 and Lys-1010 to Thr-1021. Positions Pro-1062–Ile-1075 are enriched in polar residues. Basic and acidic residues predominate over residues Glu-1091–Lys-1107. The span at Lys-1108–Pro-1123 shows a compositional bias: polar residues. A compositionally biased stretch (low complexity) spans Ser-1147–Ser-1162. 2 stretches are compositionally biased toward polar residues: residues Gly-1163–Leu-1174 and Lys-1220–Gln-1236. A Phosphoserine modification is found at Ser-1249. A compositionally biased stretch (low complexity) spans Glu-1277 to Ser-1292. Residues Ala-1307 to Glu-1317 show a composition bias toward polar residues. The segment covering Lys-1327–Pro-1358 has biased composition (basic and acidic residues). Low complexity-rich tracts occupy residues Thr-1419 to Asn-1445 and Asn-1452 to Lys-1466.

This sequence belongs to the FAM21 family. Probable component of the WASH complex.

The polypeptide is WASH complex subunit 2 (Dictyostelium discoideum (Social amoeba)).